The sequence spans 165 residues: Photosystem I assembly protein Ycf3 (165 aa).

TPR repeat units follow at residues 32–65, 69–102, and 117–150; these read AFTYYRDGMSAQSEGNYAEALQNYYEAMRLEIDP, SYILYNIGLIHTSNGEHTKALEYYFRALERNPFL, and GEQAIRQGDSEIAEAWFDQAAEYWKQALTLTPGN.

Belongs to the Ycf3 family.

Its subcellular location is the plastid. The protein localises to the chloroplast thylakoid membrane. Essential for the assembly of the photosystem I (PSI) complex. May act as a chaperone-like factor to guide the assembly of the PSI subunits. This chain is Photosystem I assembly protein Ycf3, found in Spinacia oleracea (Spinach).